A 694-amino-acid chain; its full sequence is ATP-binding cassette sub-family G member 8 (694 aa).

Residues 1 to 437 lie on the Cytoplasmic side of the membrane; sequence MAEKTKEETQ…ISNDFRDLPT (437 aa). The ABC transporter domain occupies 91–335; sequence AQFKLPWRSR…FTSIGYPCPR (245 aa). Positions 436 to 684 constitute an ABC transmembrane type-2 domain; it reads PTLFIHGAEA…FLSLYYLSLK (249 aa). A helical transmembrane segment spans residues 438 to 458; it reads LFIHGAEACLMSLIIGFLYYG. The Extracellular portion of the chain corresponds to 459-468; that stretch reads HADKPLSFMD. A helical membrane pass occupies residues 469-489; that stretch reads MAALLFMIGALIPFNVILDVV. Residues 490–518 are Cytoplasmic-facing; sequence SKCHSERSLLYYELEDGLYTAGPYFFAKV. The chain crosses the membrane as a helical span at residues 519–539; that stretch reads LGELPEHCAYVIIYGMPIYWL. At 540–548 the chain is on the extracellular side; sequence TNLRPGPEL. Residues 549–569 traverse the membrane as a helical segment; it reads FLLHFMLLWLVVFCCRTMALA. Topologically, residues 570–576 are cytoplasmic; the sequence is ASAMLPT. Residues 577–597 traverse the membrane as a helical segment; it reads FHMSSFCCNALYNSFYLTAGF. Residues 598-660 lie on the Extracellular side of the membrane; that stretch reads MINLNNLWIV…VTAMDLNSHP (63 aa). A glycan (N-linked (GlcNAc...) asparagine) is linked at Asn-640. Residues 661–681 traverse the membrane as a helical segment; it reads LYAIYLIVIGISCGFLSLYYL. At 682–694 the chain is on the cytoplasmic side; the sequence is SLKFIKQKSIQDW.

The protein belongs to the ABC transporter superfamily. ABCG family. Eye pigment precursor importer (TC 3.A.1.204) subfamily. Heterodimer with ABCG8. Mg(2+) is required as a cofactor. Post-translationally, N-glycosylated. N-glycosylation is important for efficient export out of the endoplasmic reticulum. As to expression, highest expression in liver, with lower levels in small intestine and colon.

Its subcellular location is the cell membrane. It localises to the apical cell membrane. The catalysed reaction is cholesterol(in) + ATP + H2O = cholesterol(out) + ADP + phosphate + H(+). The enzyme catalyses sitosterol(in) + ATP + H2O = sitosterol(out) + ADP + phosphate + H(+). ABCG5 and ABCG8 form an obligate heterodimer that mediates Mg(2+)- and ATP-dependent sterol transport across the cell membrane. Plays an essential role in the selective transport of the dietary cholesterol in and out of the enterocytes and in the selective sterol excretion by the liver into bile. Required for normal sterol homeostasis. The heterodimer with ABCG5 has ATPase activity. This chain is ATP-binding cassette sub-family G member 8, found in Rattus norvegicus (Rat).